Here is a 557-residue protein sequence, read N- to C-terminus: MRVAVFVLSFIWLVNGELLEADQDAVVPGDWTFLGRVGPLEEVELTFALKQQNVSKMEELLKLVSDPDSHQYGKYLSLDEVAALSRPSPLTEKVVENWLRSHGVMDCHTIITRDFLQCVMTVEVAEALLPGSKFHRFSKNTKTLLRSTSQYSVHEDVHQHLDFVGGVHRFPQKRKIVSKGWEGARQAILGYHLGVTPAVIRNRYNLTAKDVGTAANNSQAVAQFLEQYYHPADLAEFMSLFGGGFTHMSTVERVVGTQGGGKAGIEASLDVEYIMSSGANISTWVFTNPGRHESQEPFLQWMLLLSNMSAVPWVHTISYGDDEDSLSEAYMNRINIEFMKAGLRGISMLFASGDSGAGCRHLTKERNTFRPSFPASSPYVTTVGGTSFQNPFKLSYEVTDYISGGGFSNVFPMPDYQVDAVRAYLKSVQSLPPQTYFNTTGRAYPDLAALSDNYWVVSNRVPIPWVSGTSASTPVVGGILSLINDQRFLKGLPALGFINPRLYKMQGKGLYDVTVGCHLSCLDDKVEGKGFCASPSWDPVTGWGTPNYPVFLASLMD.

Positions 1-16 (MRVAVFVLSFIWLVNG) are cleaved as a signal peptide. A propeptide spans 17–190 (ELLEADQDAV…WEGARQAILG (174 aa)) (removed in mature form). N-linked (GlcNAc...) asparagine glycosylation is present at Asn53. Cys107 and Cys118 form a disulfide bridge. The 364-residue stretch at 194 to 557 (GVTPAVIRNR…YPVFLASLMD (364 aa)) folds into the Peptidase S53 domain. N-linked (GlcNAc...) asparagine glycosylation is found at Asn205 and Asn216. Active-site charge relay system residues include Glu266 and Asp270. Residues Asn280, Asn307, and Asn438 are each glycosylated (N-linked (GlcNAc...) asparagine). 2 cysteine pairs are disulfide-bonded: Cys359-Cys521 and Cys517-Cys532. Ser470 functions as the Charge relay system in the catalytic mechanism. Asp512 and Val513 together coordinate Ca(2+). Asp538 is a Ca(2+) binding site.

Ca(2+) serves as cofactor. Post-translationally, activated by autocatalytic proteolytical processing.

It is found in the lysosome. It catalyses the reaction Release of an N-terminal tripeptide from a polypeptide, but also has endopeptidase activity.. Functionally, lysosomal serine protease with tripeptidyl-peptidase I activity. May act as a non-specific lysosomal peptidase which generates tripeptides from the breakdown products produced by lysosomal proteinases. Requires substrates with an unsubstituted N-terminus. The protein is Tripeptidyl-peptidase 1 of Danio rerio (Zebrafish).